We begin with the raw amino-acid sequence, 33 residues long: Photosystem II reaction center protein Psb30 (33 aa).

A helical transmembrane segment spans residues 5–25 (LIVQLGSLTLITIAGPLIVAL).

Belongs to the Psb30/Ycf12 family. As to quaternary structure, PSII is composed of 1 copy each of membrane proteins PsbA, PsbB, PsbC, PsbD, PsbE, PsbF, PsbH, PsbI, PsbJ, PsbK, PsbL, PsbM, PsbT, PsbY, PsbZ, Psb30/Ycf12, peripheral proteins of the oxygen-evolving complex and a large number of cofactors. It forms dimeric complexes.

It localises to the plastid. The protein localises to the chloroplast thylakoid membrane. In terms of biological role, a core subunit of photosystem II (PSII), probably helps stabilize the reaction center. The polypeptide is Photosystem II reaction center protein Psb30 (Euglena mutabilis).